A 7763-amino-acid polypeptide reads, in one-letter code: Nonribosomal peptide synthetase agiA (7763 aa).

The condensation 1 stretch occupies residues 20-168; that stretch reads APSVMQEEMI…DGWSARALLE (149 aa). An adenylation 1 region spans residues 469–866; sequence EQAASKWPSK…GRADGQIKLR (398 aa). The 77-residue stretch at 995–1071 folds into the Carrier 1 domain; it reads LPESPAERLL…DVARAMSPSS (77 aa). At S1032 the chain carries O-(pantetheine 4'-phosphoryl)serine. The interval 1104–1526 is condensation 2; sequence IYPCTPQQEG…GLSDQKLITG (423 aa). Residues 1562 to 1968 form an adenylation 2 region; it reads FEMQADMTPQ…GRIDSQIKLR (407 aa). The region spanning 2090-2166 is the Carrier 2 domain; the sequence is WEQGSIEDKI…SQAKCATSHT (77 aa). S2127 bears the O-(pantetheine 4'-phosphoryl)serine mark. The segment at 2212-2556 is epimerase (E); sequence DHFNQSVLLD…IMPLVFNYQG (345 aa). Residues 2676–3016 form a condensation 3 region; that stretch reads DIIPCTPMQR…PALVNTLLNF (341 aa). Residues 3136–3531 are adenylation 3; it reads WAAQVPEKVA…GRMDDQIKIR (396 aa). A Carrier 3 domain is found at 3667-3743; sequence GPESPTEIML…ELATILNTSY (77 aa). S3704 carries the post-translational modification O-(pantetheine 4'-phosphoryl)serine. Residues 3789–4238 are condensation 4; sequence VMPCTPFQEG…ISQSIDALVQ (450 aa). Residues 4321-4687 are adenylation 4; sequence VGSQQPIIPI…GRFDRQIKIR (367 aa). The region spanning 4806–4880 is the Carrier 4 domain; the sequence is APTTEREKVI…DLARQLESTA (75 aa). O-(pantetheine 4'-phosphoryl)serine is present on S4840. The interval 4902–5339 is condensation 5; sequence SFAQGRLWFL…ALLNDLSMHD (438 aa). Positions 5361-5765 are adenylation 5; sequence FRQEARSHPD…GRRDDQVKIR (405 aa). Residues 5820-5975 are S-adenosyl-L-methionine-dependent N-methyltransferase; the sequence is DAWKNVFDTE…YLSEIVQKLV (156 aa). The region spanning 6306–6381 is the Carrier 5 domain; sequence EYGSEMERIL…RLADRLLSKQ (76 aa). O-(pantetheine 4'-phosphoryl)serine is present on S6341. Positions 6378–6399 are disordered; sequence LSKQSDSNTEANTSTDGKTQHS. Over residues 6379-6399 the composition is skewed to polar residues; the sequence is SKQSDSNTEANTSTDGKTQHS. Residues 6424 to 6883 are condensation 6; sequence MPCTPFQEGV…TVGDAEEAAL (460 aa). The adenylation 6 stretch occupies residues 6913–7327; it reads RQAMESPCKI…GRMDSQVKLR (415 aa). The region spanning 7446–7522 is the Carrier 6 domain; that stretch reads PSPGTLEATL…SQAFRILCDV (77 aa). At S7483 the chain carries O-(pantetheine 4'-phosphoryl)serine. The tract at residues 7542–7638 is thioesterase (TE); that stretch reads TMVLIHPFFG…TGKGSPFSTV (97 aa).

This sequence belongs to the NRP synthetase family.

Functionally, nonribosomal peptide synthetase; part of the gene cluster that mediates the biosynthesis of the aspergillicins A and F, 2 cryptic cyclic hexa-depsipeptides. The hexamodular NRPS agiA catalyzes the condensation of the six amino acid residues including N-Me-L-O-Me-tyrosine, L-proline 1, L-proline 2, D-isoleucine, O-acetyl-threonine, and L-isoleucine. The starting condensation domain (C1) of agiA probably loads acetyl-CoA which is condensed on the N-terminus of threonine by the first module to yield O-acetyl-threonine. The second module then loads L-isoleucine. The epimerase (E) domain on module 2 is probably involved in the formation of the D-isoleucine moiety. Modules 3 and 4 further load 2 successive L-prolines. Module 5 is then involved in the condensation of O-Me-L-tyrosine produced by the O-methyltransferase agiB and the N-methyl transferase (NMeT) domain on module 5 probably catalyzes the N-methylation to yield the N-Me-L-O-Me-tyrosine moiety. The A domain of module 5 loads preferentially O-Me-L-tyrosine, but it can also accept L-phenylalanine, which leads to the production of aspergillicin G. Module 6 then loads the last residue, L-isoleucine. The C-terminal thiolesterase (TE) domain probably cyclizes the peptide using the hydroxy group from threonine to form the cyclic depsipeptide. The chain is Nonribosomal peptide synthetase agiA from Aspergillus flavus (strain ATCC 200026 / FGSC A1120 / IAM 13836 / NRRL 3357 / JCM 12722 / SRRC 167).